We begin with the raw amino-acid sequence, 172 residues long: MAKMQAKVQADERDDGLREKMISVNRVTKVVKGGRILGFAALTVVGDGDGRIGMGKGKAKEVPVAVQKAMEQARRNMFKVPLKNGTLQHEVHGKHGASAVLLAPAKAGTGVIAGGPMRAVFDVMGVQNVVAKSHGSTNPYNLVRATLDGLRKQSTPADIAAKRGKSVEDILG.

Residues 17-80 form the S5 DRBM domain; sequence LREKMISVNR…EQARRNMFKV (64 aa).

This sequence belongs to the universal ribosomal protein uS5 family. As to quaternary structure, part of the 30S ribosomal subunit. Contacts proteins S4 and S8.

In terms of biological role, with S4 and S12 plays an important role in translational accuracy. Located at the back of the 30S subunit body where it stabilizes the conformation of the head with respect to the body. The chain is Small ribosomal subunit protein uS5 from Burkholderia orbicola (strain AU 1054).